Here is a 324-residue protein sequence, read N- to C-terminus: COP9 signalosome complex subunit 6 (324 aa).

The MPN domain maps to 38–171 (VALHPLVILN…VSVFESVIDI (134 aa)).

It belongs to the peptidase M67A family. CSN6 subfamily. As to quaternary structure, component of the CSN complex, composed of COPS1/GPS1, COPS2, COPS3, COPS4, COPS5, COPS6, COPS7 (COPS7A or COPS7B), COPS8 and COPS9. In the complex, it probably interacts directly with COPS2, COPS4, COPS5, COPS7 (COPS7A or COPS7B) and COPS9. Interacts with the translation initiation factor EIF3S6. Interacts weakly with RBX1. Directly interacts with COP1 and 14-3-3 protein sigma/SFN. Interacts with ERCC6.

The protein localises to the cytoplasm. The protein resides in the nucleus. Component of the COP9 signalosome complex (CSN), a complex involved in various cellular and developmental processes. The CSN complex is an essential regulator of the ubiquitin (Ubl) conjugation pathway by mediating the deneddylation of the cullin subunits of SCF-type E3 ligase complexes, leading to decrease the Ubl ligase activity of SCF-type complexes such as SCF, CSA or DDB2. The complex is also involved in phosphorylation of p53/TP53, c-jun/JUN, IkappaBalpha/NFKBIA, ITPK1 and IRF8, possibly via its association with CK2 and PKD kinases. CSN-dependent phosphorylation of TP53 and JUN promotes and protects degradation by the Ubl system, respectively. Has some glucocorticoid receptor-responsive activity. Stabilizes COP1 through reducing COP1 auto-ubiquitination and decelerating COP1 turnover rate, hence regulates the ubiquitination of COP1 targets, including SFN. This chain is COP9 signalosome complex subunit 6 (COPS6), found in Bos taurus (Bovine).